Consider the following 327-residue polypeptide: Phenylalanine--tRNA ligase alpha subunit (327 aa).

Glu252 provides a ligand contact to Mg(2+).

This sequence belongs to the class-II aminoacyl-tRNA synthetase family. Phe-tRNA synthetase alpha subunit type 1 subfamily. In terms of assembly, tetramer of two alpha and two beta subunits. The cofactor is Mg(2+).

The protein resides in the cytoplasm. It catalyses the reaction tRNA(Phe) + L-phenylalanine + ATP = L-phenylalanyl-tRNA(Phe) + AMP + diphosphate + H(+). This is Phenylalanine--tRNA ligase alpha subunit from Salmonella newport (strain SL254).